A 314-amino-acid polypeptide reads, in one-letter code: Probable cell division protein WhiA (314 aa).

A DNA-binding region (H-T-H motif) is located at residues 274-308; sequence SLKELGEMVSTGPISKSGVNHRLRKLNDLADKIRN.

The protein belongs to the WhiA family.

Its function is as follows. Involved in cell division and chromosome segregation. This is Probable cell division protein WhiA from Staphylococcus aureus (strain USA300).